Consider the following 1893-residue polypeptide: Transcription initiation factor TFIID subunit 1 (1893 aa).

Residues 1-435 (MGPGCDLLLR…VTQLHWEDDI (435 aa)) form the Protein kinase 1 domain. The residue at position 137 (Ser137) is a Phosphoserine; by autocatalysis. Disordered regions lie at residues 155–184 (LMPPPPPPPGPMKKDKDQDSITGVSENGEG) and 197–224 (ASEKVDFSSSSDSESEMGPQEATQAESE). A compositionally biased stretch (pro residues) spans 156 to 165 (MPPPPPPPGP). Positions 197–208 (ASEKVDFSSSSD) are enriched in low complexity. Ser328 bears the Phosphoserine; by autocatalysis mark. The segment at 534 to 557 (IPDEKEEATSNSPSKESKKESSLK) is disordered. The interval 538–997 (KEEATSNSPS…KIPNKPTQQK (460 aa)) is histone acetyltransferase (HAT). At Lys565 the chain carries N6-acetyllysine. Residues Lys570 and Lys583 each participate in a glycyl lysine isopeptide (Lys-Gly) (interchain with G-Cter in SUMO2) cross-link. 4 disordered regions span residues 990-1009 (PNKPTQQKDDKEPQPVKKTV), 1128-1148 (MLQNKKTSSQLSREREEQERK), 1158-1177 (GSAASGNNHRDDDTASVTSL), and 1254-1278 (RLKRNQEKEKLKGPPEKKPKKMKER). 2 stretches are compositionally biased toward basic and acidic residues: residues 995–1004 (QQKDDKEPQP) and 1139–1148 (SREREEQERK). The segment at residues 1216 to 1294 (VRIRTTKDEE…CGACGAIGHM (79 aa)) is a DNA-binding region (HMG box; involved in promoter binding). Over residues 1254–1270 (RLKRNQEKEKLKGPPEK) the composition is skewed to basic and acidic residues. The segment at 1363–1650 (VLKFPKQQLP…TAKEAALEEA (288 aa)) is interaction with ASF1A and ASF1B. Positions 1372–1379 (PPKKKRRV) match the Nuclear localization signal motif. 2 Bromo domains span residues 1397–1505 (RRRT…LKEK) and 1519–1628 (LLDD…LTEY). Residues 1446–1893 (MDLQTLRENV…AGDSDLDSDE (448 aa)) enclose the Protein kinase 2 domain. The interval 1651–1676 (ELESLDPMTPGPYTPQPPDLYDTNTS) is disordered. Residues 1659 to 1668 (TPGPYTPQPP) are compositionally biased toward pro residues. Residues Ser1690, Ser1693, Ala1718, Glu1721, and Gly1723 each carry the phosphoserine modification. Residues 1696 to 1893 (DIPSATPEKQ…AGDSDLDSDE (198 aa)) form a disordered region. Composition is skewed to acidic residues over residues 1709 to 1723 (EGEDGDGDLADEEEG) and 1741 to 1756 (EGEDDEEDAGSDEEGD). 3 positions are modified to phosphoserine: Ser1799, Ser1802, and Ser1820. The segment covering 1830 to 1840 (KSNTQDTSFSS) has biased composition (polar residues). A compositionally biased stretch (acidic residues) spans 1846 to 1857 (VSEEEEDEEEEE). Ser1847 carries the phosphoserine modification. Positions 1860–1869 (SGPSVLSQVH) are enriched in polar residues.

It belongs to the TAF1 family. Component of the TFIID basal transcription factor complex, composed of TATA-box-binding protein TBP, and a number of TBP-associated factors (TAFs), including TAF1, TAF2, TAF3, TAF4, TAF5, TAF6, TAF7, TAF8, TAF9, TAF10, TAF11, TAF12 and TAF13. Interacts with TAF7; the interaction is direct. TAF1, when part of the TFIID complex, interacts with C-terminus of TP53. Part of a TFIID-containing RNA polymerase II pre-initiation complex that is composed of TBP and at least GTF2A1, GTF2A2, GTF2E1, GTF2E2, GTF2F1, GTF2H2, GTF2H3, GTF2H4, GTF2H5, GTF2B, TCEA1, ERCC2, ERCC3, TAF1, TAF2, TAF3, TAF4, TAF5, TAF6, TAF7, TAF8, TAF9, TAF10, TAF11, TAF12 and TAF13. Component of some MLL1/MLL complex, at least composed of the core components KMT2A/MLL1, ASH2L, HCFC1/HCF1, WDR5 and RBBP5, as well as the facultative components BACC1, CHD8, E2F6, HSP70, INO80C, KANSL1, LAS1L, MAX, MCRS1, MGA, KAT8/MOF, PELP1, PHF20, PRP31, RING2, RUVB1/TIP49A, RUVB2/TIP49B, SENP3, TAF1, TAF4, TAF6, TAF7, TAF9 and TEX10. RB1 interacts with the N-terminal domain of TAF1. Interacts with ASF1A and ASF1B. Interacts (via bromo domains) with acetylated lysine residues on the N-terminus of histone H1.4, H2A, H2B, H3 and H4 (in vitro). As to quaternary structure, (Microbial infection) Interacts with SV40 Large T antigen. In terms of assembly, (Microbial infection) Interacts with herpes simplex virus 1 ICP4. Requires Mg(2+) as cofactor. In terms of processing, phosphorylated by casein kinase II in vitro.

The protein resides in the nucleus. It carries out the reaction L-seryl-[protein] + ATP = O-phospho-L-seryl-[protein] + ADP + H(+). It catalyses the reaction L-threonyl-[protein] + ATP = O-phospho-L-threonyl-[protein] + ADP + H(+). The enzyme catalyses L-lysyl-[protein] + acetyl-CoA = N(6)-acetyl-L-lysyl-[protein] + CoA + H(+). Autophosphorylates on Ser residues. Inhibited by retinoblastoma tumor suppressor protein, RB1. Binding to TAF7 or CIITA inhibits the histone acetyltransferase activity. Functionally, the TFIID basal transcription factor complex plays a major role in the initiation of RNA polymerase II (Pol II)-dependent transcription. TFIID recognizes and binds promoters with or without a TATA box via its subunit TBP, a TATA-box-binding protein, and promotes assembly of the pre-initiation complex (PIC). The TFIID complex consists of TBP and TBP-associated factors (TAFs), including TAF1, TAF2, TAF3, TAF4, TAF5, TAF6, TAF7, TAF8, TAF9, TAF10, TAF11, TAF12 and TAF13. TAF1 is the largest component and core scaffold of the TFIID complex, involved in nucleating complex assembly. TAF1 forms a promoter DNA binding subcomplex of TFIID, together with TAF7 and TAF2. Contains novel N- and C-terminal Ser/Thr kinase domains which can autophosphorylate or transphosphorylate other transcription factors. Phosphorylates TP53 on 'Thr-55' which leads to MDM2-mediated degradation of TP53. Phosphorylates GTF2A1 and GTF2F1 on Ser residues. Possesses DNA-binding activity. Essential for progression of the G1 phase of the cell cycle. Exhibits histone acetyltransferase activity towards histones H3 and H4. The protein is Transcription initiation factor TFIID subunit 1 of Homo sapiens (Human).